A 365-amino-acid chain; its full sequence is Succinyl-diaminopimelate desuccinylase (365 aa).

His-64 contacts Zn(2+). Asp-66 is a catalytic residue. Zn(2+) is bound at residue Asp-95. The active-site Proton acceptor is Glu-125. Zn(2+)-binding residues include Glu-126, Glu-154, and His-339.

It belongs to the peptidase M20A family. DapE subfamily. Homodimer. Zn(2+) is required as a cofactor. Co(2+) serves as cofactor.

It carries out the reaction N-succinyl-(2S,6S)-2,6-diaminopimelate + H2O = (2S,6S)-2,6-diaminopimelate + succinate. It functions in the pathway amino-acid biosynthesis; L-lysine biosynthesis via DAP pathway; LL-2,6-diaminopimelate from (S)-tetrahydrodipicolinate (succinylase route): step 3/3. Its function is as follows. Catalyzes the hydrolysis of N-succinyl-L,L-diaminopimelic acid (SDAP), forming succinate and LL-2,6-diaminopimelate (DAP), an intermediate involved in the bacterial biosynthesis of lysine and meso-diaminopimelic acid, an essential component of bacterial cell walls. This Campylobacter curvus (strain 525.92) protein is Succinyl-diaminopimelate desuccinylase.